Reading from the N-terminus, the 89-residue chain is MAVTSAKKNPGSPGIEELISRLEEITRNIENPETGIENSIALYEEGLAIAEQCKKRLQEARKKIEIINPELAKNWPDTARNRDLFDSEI.

The protein belongs to the XseB family. Heterooligomer composed of large and small subunits.

The protein localises to the cytoplasm. It catalyses the reaction Exonucleolytic cleavage in either 5'- to 3'- or 3'- to 5'-direction to yield nucleoside 5'-phosphates.. Its function is as follows. Bidirectionally degrades single-stranded DNA into large acid-insoluble oligonucleotides, which are then degraded further into small acid-soluble oligonucleotides. This Chlorobium phaeobacteroides (strain DSM 266 / SMG 266 / 2430) protein is Exodeoxyribonuclease 7 small subunit.